The chain runs to 263 residues: MFRNQYDNDVTVWSPQGRIHQIEYAMEAVKQGSATVGLKSKTHAVLVALKRAQSELAAHQKKILHVDNHIGISIAGLTADARLLCNFMRQECLDSRFVFDRPLPVSRLVSLIGSKTQIPTQRYGRRPYGVGLLIAGYDDMGPHVFQTCPSANYFDCRAMSIGARSQSARTYLERHMSEFMQCNLDELVKHGLRALRETLPAEQDLTTKNVSIGIVGKDLEFTIYDDDDVSPFLDGLEERPQRKAQPSQAADEPAEKADEPMEH.

M1 is subject to N-acetylmethionine. A Phosphoserine; alternate modification is found at S110. S110 is a glycosylation site (O-linked (GlcNAc) serine; alternate). Residue K115 forms a Glycyl lysine isopeptide (Lys-Gly) (interchain with G-Cter in ubiquitin) linkage. At S177 the chain carries Phosphoserine. A Glycyl lysine isopeptide (Lys-Gly) (interchain with G-Cter in ubiquitin) cross-link involves residue K208. Positions 232-263 are disordered; sequence FLDGLEERPQRKAQPSQAADEPAEKADEPMEH. Positions 253–263 are enriched in basic and acidic residues; the sequence is PAEKADEPMEH.

This sequence belongs to the peptidase T1A family. In terms of assembly, the 26S proteasome consists of a 20S proteasome core and two 19S regulatory subunits. The 20S proteasome core is a barrel-shaped complex made of 28 subunits that are arranged in four stacked rings. The two outer rings are each formed by seven alpha subunits, and the two inner rings are formed by seven beta subunits. The proteolytic activity is exerted by three beta-subunits PSMB5, PSMB6 and PSMB7. Interacts with NOTCH3. Interacts with ZFAND1. Post-translationally, proteolytically cleaved from a C-terminal extension in the course of the conversion of the proteasome from its latent form into its active form. Ubiquitous.

The protein resides in the cytoplasm. The protein localises to the nucleus. Its function is as follows. Component of the 20S core proteasome complex involved in the proteolytic degradation of most intracellular proteins. This complex plays numerous essential roles within the cell by associating with different regulatory particles. Associated with two 19S regulatory particles, forms the 26S proteasome and thus participates in the ATP-dependent degradation of ubiquitinated proteins. The 26S proteasome plays a key role in the maintenance of protein homeostasis by removing misfolded or damaged proteins that could impair cellular functions, and by removing proteins whose functions are no longer required. Associated with the PA200 or PA28, the 20S proteasome mediates ubiquitin-independent protein degradation. This type of proteolysis is required in several pathways including spermatogenesis (20S-PA200 complex) or generation of a subset of MHC class I-presented antigenic peptides (20S-PA28 complex). This is Proteasome subunit alpha type-1 (Psma1) from Rattus norvegicus (Rat).